Here is a 156-residue protein sequence, read N- to C-terminus: Ribosomal RNA large subunit methyltransferase H (156 aa).

S-adenosyl-L-methionine is bound by residues Leu-73, Gly-104, and 123–128 (LSSLTL).

The protein belongs to the RNA methyltransferase RlmH family. Homodimer.

The protein resides in the cytoplasm. It carries out the reaction pseudouridine(1915) in 23S rRNA + S-adenosyl-L-methionine = N(3)-methylpseudouridine(1915) in 23S rRNA + S-adenosyl-L-homocysteine + H(+). Functionally, specifically methylates the pseudouridine at position 1915 (m3Psi1915) in 23S rRNA. This Neisseria gonorrhoeae (strain NCCP11945) protein is Ribosomal RNA large subunit methyltransferase H.